A 501-amino-acid chain; its full sequence is Sodium-coupled neutral amino acid symporter 2 (501 aa).

Residues 1 to 26 form a disordered region; sequence MSSAEMGKFDISPDEDSSSYSSNSND. Residues 1–77 are Cytoplasmic-facing; the sequence is MSSAEMGKFD…HPGTTSFGMS (77 aa). The regulates protein turnover upon amino acid deprivation stretch occupies residues 1 to 97; it reads MSSAEMGKFD…SGILGLSYAM (97 aa). A helical transmembrane segment spans residues 78–97; the sequence is VFNLSNAIVGSGILGLSYAM. Residue Asn83 participates in Na(+) binding. The Extracellular portion of the chain corresponds to 98–103; that stretch reads ANTGIA. Residues 104-124 traverse the membrane as a helical segment; it reads LFVILLLVVSILSLYSVHLLL. At 125 to 159 the chain is on the cytoplasmic side; the sequence is KTANEGGSLLYEQLGMKAFGMPGKLAASGSITMQN. A helical membrane pass occupies residues 160-178; sequence IGAMSSYLFIVKYELPLVI. The Extracellular portion of the chain corresponds to 179–189; it reads KTFMNIEENAG. The chain crosses the membrane as a helical span at residues 190–210; sequence HWYLNGDYLVLLVSVILILPL. Residues 211-218 are Cytoplasmic-facing; it reads SLLKNLGY. A helical membrane pass occupies residues 219 to 239; it reads LGYTSGFSLLCMVFFLIVVIW. The Extracellular segment spans residues 240–287; the sequence is KMFQIPCPMESDIINATLINATLAPFADENITISDACKPEYFIFNSQT. The cysteines at positions 246 and 276 are disulfide-linked. Asn254 and Asn259 each carry an N-linked (GlcNAc...) asparagine glycan. Residues 288 to 308 traverse the membrane as a helical segment; that stretch reads VYAVPILTFSFVCHPAILPIY. The Cytoplasmic portion of the chain corresponds to 309-324; the sequence is EELKSRSRKRMMNVSY. A helical membrane pass occupies residues 325–345; it reads VSFFAMFLMYLLAALFGYLTF. Over 346 to 366 the chain is Extracellular; sequence YGRVESELLHTYSAFLGADIL. The helical transmembrane segment at 367 to 387 threads the bilayer; it reads LLIVRLAVLMAVTLTVPVVIF. Na(+) is bound at residue Thr381. Residues 388-408 lie on the Cytoplasmic side of the membrane; it reads PIRSSVTQLLWAGKEFSWWRH. A helical membrane pass occupies residues 409-429; it reads CSITVVLLAFTNVLVIFVPTI. Residues 430-431 are Extracellular-facing; sequence RD. A helical transmembrane segment spans residues 432–452; that stretch reads IFGFIGASAAAMLIFILPSAF. At 453-467 the chain is on the cytoplasmic side; sequence YIKLVKKEPMKSVQK. Residues 468-490 traverse the membrane as a helical segment; sequence IGAALFFLSGILVMTGCMTLIIL. Residues 491-501 lie on the Extracellular side of the membrane; the sequence is DWIHTDASDGH.

It belongs to the amino acid/polyamine transporter 2 family.

It localises to the cell membrane. The enzyme catalyses L-alanine(in) + Na(+)(in) = L-alanine(out) + Na(+)(out). It catalyses the reaction glycine(in) + Na(+)(in) = glycine(out) + Na(+)(out). The catalysed reaction is L-serine(in) + Na(+)(in) = L-serine(out) + Na(+)(out). It carries out the reaction L-proline(in) + Na(+)(in) = L-proline(out) + Na(+)(out). The enzyme catalyses L-methionine(in) + Na(+)(in) = L-methionine(out) + Na(+)(out). It catalyses the reaction L-histidine(in) + Na(+)(in) = L-histidine(out) + Na(+)(out). The catalysed reaction is L-asparagine(in) + Na(+)(in) = L-asparagine(out) + Na(+)(out). It carries out the reaction L-glutamine(in) + Na(+)(in) = L-glutamine(out) + Na(+)(out). The enzyme catalyses L-threonine(in) + Na(+)(in) = L-threonine(out) + Na(+)(out). It catalyses the reaction L-leucine(in) + Na(+)(in) = L-leucine(out) + Na(+)(out). The catalysed reaction is L-phenylalanine(in) + Na(+)(in) = L-phenylalanine(out) + Na(+)(out). With respect to regulation, inhibited by N-methyl-D-glucamine. Inhibited by choline. Allosteric regulation of sodium ions binding by pH. In terms of biological role, symporter that cotransports neutral amino acids and sodium ions from the extracellular to the intracellular side of the cell membrane. The transport is pH-sensitive, Li(+)-intolerant, electrogenic, driven by the Na(+) electrochemical gradient and cotransports of neutral amino acids and sodium ions with a stoichiometry of 1:1. The chain is Sodium-coupled neutral amino acid symporter 2 from Gallus gallus (Chicken).